The chain runs to 225 residues: Red fluorescent protein drFP583 (225 aa).

Positions 66-68 (QYG) form a cross-link, 2-iminomethyl-5-imidazolinone (Gln-Gly). Tyr67 carries the (Z)-2,3-didehydrotyrosine modification.

It belongs to the GFP family. As to quaternary structure, homotetramer. Contains a chromophore consisting of modified amino acid residues. The chromophore is formed by autocatalytic backbone condensation between Xaa-N and Gly-(N+2), oxidation of Tyr-(N+1) to didehydrotyrosine, and formation of a double bond to the alpha-amino nitrogen of residue Xaa-N. Maturation of the chromophore requires nothing other than molecular oxygen.

Functionally, thought to play a role in photoprotection of the coral's resident symbiont microalgae's photosystems from photoinhibition caused by high light levels found near the surface of coral reefs. In deeper water, the fluorescence may be to convert blue light into longer wavelengths more suitable for use in photosynthesis by the microalgal symbionts. This chain is Red fluorescent protein drFP583, found in Discosoma sp. (Sea anemone).